Consider the following 237-residue polypeptide: UPF0173 metal-dependent hydrolase BCAN_B0597 (237 aa).

This sequence belongs to the UPF0173 family.

The chain is UPF0173 metal-dependent hydrolase BCAN_B0597 from Brucella canis (strain ATCC 23365 / NCTC 10854 / RM-666).